Reading from the N-terminus, the 104-residue chain is Small ribosomal subunit protein uS10 (104 aa).

Belongs to the universal ribosomal protein uS10 family. In terms of assembly, part of the 30S ribosomal subunit.

Involved in the binding of tRNA to the ribosomes. The polypeptide is Small ribosomal subunit protein uS10 (Helicobacter pylori (strain J99 / ATCC 700824) (Campylobacter pylori J99)).